Reading from the N-terminus, the 610-residue chain is Elongation factor 4 (610 aa).

One can recognise a tr-type G domain in the interval 12-194; it reads EKIRNFSIIA…QIVEKVPAPQ (183 aa). GTP contacts are provided by residues 24–29 and 141–144; these read DHGKST and NKID.

This sequence belongs to the TRAFAC class translation factor GTPase superfamily. Classic translation factor GTPase family. LepA subfamily.

It localises to the cell membrane. The enzyme catalyses GTP + H2O = GDP + phosphate + H(+). Required for accurate and efficient protein synthesis under certain stress conditions. May act as a fidelity factor of the translation reaction, by catalyzing a one-codon backward translocation of tRNAs on improperly translocated ribosomes. Back-translocation proceeds from a post-translocation (POST) complex to a pre-translocation (PRE) complex, thus giving elongation factor G a second chance to translocate the tRNAs correctly. Binds to ribosomes in a GTP-dependent manner. This Streptococcus thermophilus (strain ATCC BAA-250 / LMG 18311) protein is Elongation factor 4.